Here is an 88-residue protein sequence, read N- to C-terminus: Small ribosomal subunit protein uS15 (88 aa).

Belongs to the universal ribosomal protein uS15 family. Part of the 30S ribosomal subunit. Forms a bridge to the 50S subunit in the 70S ribosome, contacting the 23S rRNA.

In terms of biological role, one of the primary rRNA binding proteins, it binds directly to 16S rRNA where it helps nucleate assembly of the platform of the 30S subunit by binding and bridging several RNA helices of the 16S rRNA. Functionally, forms an intersubunit bridge (bridge B4) with the 23S rRNA of the 50S subunit in the ribosome. In Polaromonas sp. (strain JS666 / ATCC BAA-500), this protein is Small ribosomal subunit protein uS15.